Reading from the N-terminus, the 774-residue chain is Transcription factor MBS1 (774 aa).

In terms of domain architecture, HTH APSES-type spans 37–143 (EITFYDSGVP…YVPTSVSPPP (107 aa)). A DNA-binding region (H-T-H motif) is located at residues 68–89 (ATQILKVAGFDKPQRTRVLERE). Disordered regions lie at residues 135-180 (VPTS…SAAA) and 209-229 (RVSL…VASV). The span at 155-165 (ARRDKEKETGR) shows a compositional bias: basic and acidic residues. Positions 166-176 (TKATPSRTGPT) are enriched in polar residues. 2 ANK repeats span residues 348 to 377 (DGHT…SIFA) and 467 to 496 (EGET…NPKI). The segment at 752 to 774 (EEENDNQVYNTSAGESGPSSWVQ) is disordered. Polar residues predominate over residues 757-774 (NQVYNTSAGESGPSSWVQ).

It is found in the nucleus. In terms of biological role, transcription factor that positively regulates ergosterol biosynthesis and thereby affects polyene and azole drug susceptibility. Plays a role in maintenance of membrane stability and osmotic stress response. Involved in genotoxic and oxidative stress responses. Also promotes production of melanin and capsule and thereby is required for full virulence. This is Transcription factor MBS1 from Cryptococcus neoformans var. grubii serotype A (strain H99 / ATCC 208821 / CBS 10515 / FGSC 9487) (Filobasidiella neoformans var. grubii).